Consider the following 286-residue polypeptide: 4-diphosphocytidyl-2-C-methyl-D-erythritol kinase (286 aa).

Residue lysine 10 is part of the active site. Position 100–110 (100–110 (PMGSGLGGGSS)) interacts with ATP. Aspartate 142 is an active-site residue.

Belongs to the GHMP kinase family. IspE subfamily. Homodimer.

It carries out the reaction 4-CDP-2-C-methyl-D-erythritol + ATP = 4-CDP-2-C-methyl-D-erythritol 2-phosphate + ADP + H(+). The protein operates within isoprenoid biosynthesis; isopentenyl diphosphate biosynthesis via DXP pathway; isopentenyl diphosphate from 1-deoxy-D-xylulose 5-phosphate: step 3/6. Catalyzes the phosphorylation of the position 2 hydroxy group of 4-diphosphocytidyl-2C-methyl-D-erythritol. The polypeptide is 4-diphosphocytidyl-2-C-methyl-D-erythritol kinase (Buchnera aphidicola subsp. Acyrthosiphon pisum (strain APS) (Acyrthosiphon pisum symbiotic bacterium)).